Here is a 420-residue protein sequence, read N- to C-terminus: UDP-N-acetyl-D-mannosamine dehydrogenase (420 aa).

NAD(+)-binding residues include Tyr-13, Ile-14, Asp-33, Thr-85, and Thr-126. 8 residues coordinate UDP-N-acetyl-alpha-D-mannosaminouronate: Arg-160, Val-161, Lys-212, Asn-216, Arg-219, His-250, Arg-252, and Gly-263. Lys-212 serves as the catalytic Proton donor/acceptor. Cys-266 acts as the Nucleophile in catalysis. UDP-N-acetyl-alpha-D-mannosaminouronate is bound by residues Phe-330 and Lys-331. Residue Arg-338 coordinates NAD(+). Residue Lys-416 participates in UDP-N-acetyl-alpha-D-mannosaminouronate binding.

The protein belongs to the UDP-glucose/GDP-mannose dehydrogenase family. WecC subfamily. Homodimer.

It catalyses the reaction UDP-N-acetyl-alpha-D-mannosamine + 2 NAD(+) + H2O = UDP-N-acetyl-alpha-D-mannosaminouronate + 2 NADH + 3 H(+). It functions in the pathway bacterial outer membrane biogenesis; enterobacterial common antigen biosynthesis. Its function is as follows. Catalyzes the four-electron oxidation of UDP-N-acetyl-D-mannosamine (UDP-ManNAc), reducing NAD(+) and releasing UDP-N-acetylmannosaminuronic acid (UDP-ManNAcA). This is UDP-N-acetyl-D-mannosamine dehydrogenase from Salmonella typhi.